The following is a 483-amino-acid chain: GTPase Der (483 aa).

2 consecutive EngA-type G domains span residues 3-167 (FTLA…GEER) and 212-387 (LRIA…EIWN). Residues 9 to 16 (GRPNVGKS), 56 to 60 (DTAGL), 119 to 122 (NKAE), 218 to 225 (GRPNAGKS), 265 to 269 (DTAGM), and 330 to 333 (NKWD) each bind GTP. The KH-like domain maps to 388 to 472 (RRISTGRLNR…PIRLSLRTSD (85 aa)).

It belongs to the TRAFAC class TrmE-Era-EngA-EngB-Septin-like GTPase superfamily. EngA (Der) GTPase family. Associates with the 50S ribosomal subunit.

Functionally, GTPase that plays an essential role in the late steps of ribosome biogenesis. This chain is GTPase Der, found in Brucella suis (strain ATCC 23445 / NCTC 10510).